The chain runs to 244 residues: Small ribosomal subunit protein eS4 (244 aa).

The S4 RNA-binding domain maps to 43-106; it reads LPLLLIVRDT…NENYLVLFDE (64 aa).

This sequence belongs to the eukaryotic ribosomal protein eS4 family.

This chain is Small ribosomal subunit protein eS4 (rps4e), found in Methanococcus vannielii.